Reading from the N-terminus, the 342-residue chain is L-threonine 3-dehydrogenase (342 aa).

Cys-38 is a Zn(2+) binding site. Catalysis depends on charge relay system residues Thr-40 and His-43. Zn(2+)-binding residues include His-63, Glu-64, Cys-93, Cys-96, Cys-99, and Cys-107. Residues Ile-175, Asp-195, Arg-200, 262-264 (LGL), and 286-287 (IY) contribute to the NAD(+) site.

It belongs to the zinc-containing alcohol dehydrogenase family. Homotetramer. Zn(2+) is required as a cofactor.

It localises to the cytoplasm. It catalyses the reaction L-threonine + NAD(+) = (2S)-2-amino-3-oxobutanoate + NADH + H(+). It functions in the pathway amino-acid degradation; L-threonine degradation via oxydo-reductase pathway; glycine from L-threonine: step 1/2. Functionally, catalyzes the NAD(+)-dependent oxidation of L-threonine to 2-amino-3-ketobutyrate. The chain is L-threonine 3-dehydrogenase from Streptomyces avermitilis (strain ATCC 31267 / DSM 46492 / JCM 5070 / NBRC 14893 / NCIMB 12804 / NRRL 8165 / MA-4680).